A 280-amino-acid chain; its full sequence is 2-dehydro-3-deoxyphosphooctonate aldolase (280 aa).

The protein belongs to the KdsA family.

Its subcellular location is the cytoplasm. The enzyme catalyses D-arabinose 5-phosphate + phosphoenolpyruvate + H2O = 3-deoxy-alpha-D-manno-2-octulosonate-8-phosphate + phosphate. It participates in carbohydrate biosynthesis; 3-deoxy-D-manno-octulosonate biosynthesis; 3-deoxy-D-manno-octulosonate from D-ribulose 5-phosphate: step 2/3. Its pathway is bacterial outer membrane biogenesis; lipopolysaccharide biosynthesis. This is 2-dehydro-3-deoxyphosphooctonate aldolase from Thiobacillus denitrificans (strain ATCC 25259 / T1).